Reading from the N-terminus, the 320-residue chain is MSKSASPKEPEQLRKLFIGGLSFETTDESLRSHFEQWGTLTDCVVMRDPNTKRSRGFGFVTYATVEEVDAAMNTTPHKVDGRVVEPKRAVSREDSQRPGAHLTVKKIFVGGIKEDTEEHHLRDYFEQYGKIEVIEIMTDRGSGKKRGFAFVTFDDHDSVDKIVIQKYHTVKGHNCEVRKALPKQEMASASSSQRGRRGSGNFGGGRGDGFGGNDNFGRGGNFSGRGGFGGSCGGGGYGGSGDGYNGFGNDGSNFGGGGSYNDFGNYNNQSSNFGPMKGGNFGGRSSGPYGGGGQYFAKPQNQGGYGVSSSSSSYGSGRRF.

The segment at 4–94 is globular A domain; the sequence is SASPKEPEQL…EPKRAVSRED (91 aa). 2 positions are modified to phosphoserine: serine 6 and serine 22. RRM domains lie at 14 to 97 and 105 to 184; these read RKLF…DSQR and KKIF…LPKQ. Positions 95–185 are globular B domain; the sequence is SQRPGAHLTV…EVRKALPKQE (91 aa). The disordered stretch occupies residues 181-216; sequence LPKQEMASASSSQRGRRGSGNFGGGRGDGFGGNDNF. Asymmetric dimethylarginine; alternate is present on residues arginine 194, arginine 206, arginine 218, and arginine 225. Omega-N-methylarginine; alternate is present on residues arginine 194, arginine 206, arginine 218, and arginine 225. Gly residues predominate over residues 198 to 216; the sequence is GSGNFGGGRGDGFGGNDNF. The tract at residues 218 to 240 is RNA-binding RGG-box; it reads RGGNFSGRGGFGGSCGGGGYGGS. The nuclear targeting sequence stretch occupies residues 268-305; sequence NQSSNFGPMKGGNFGGRSSGPYGGGGQYFAKPQNQGGY. The disordered stretch occupies residues 271–320; the sequence is SNFGPMKGGNFGGRSSGPYGGGGQYFAKPQNQGGYGVSSSSSSYGSGRRF. Residues 276-294 are compositionally biased toward gly residues; sequence MKGGNFGGRSSGPYGGGGQ. Position 284 is an omega-N-methylarginine (arginine 284). The residue at position 298 (lysine 298) is an N6-acetyllysine. Residues 307–320 are compositionally biased toward low complexity; that stretch reads VSSSSSSYGSGRRF.

The protein resides in the nucleus. It is found in the cytoplasm. Involved in the packaging of pre-mRNA into hnRNP particles, transport of poly(A) mRNA from the nucleus to the cytoplasm and may modulate splice site selection. This chain is Heterogeneous nuclear ribonucleoprotein A1-like 2 (HNRNPA1L2), found in Homo sapiens (Human).